A 953-amino-acid polypeptide reads, in one-letter code: Dual serine/threonine and tyrosine protein kinase (953 aa).

Positions 665-926 constitute a Protein kinase domain; sequence PKLEREIGRG…VQSKLQDIYT (262 aa). ATP is bound by residues 671-679 and Lys-694; that span reads IGRGQYGVV. Residue Asp-791 is the Proton acceptor of the active site. Positions 932–953 are disordered; the sequence is REAEGGGGGGAKEQQNLKSDTL.

This sequence belongs to the protein kinase superfamily. Ser/Thr protein kinase family.

It is found in the cytoplasm. The protein resides in the cell membrane. Its subcellular location is the apical cell membrane. The protein localises to the basolateral cell membrane. It localises to the cell junction. The enzyme catalyses L-seryl-[protein] + ATP = O-phospho-L-seryl-[protein] + ADP + H(+). It catalyses the reaction L-threonyl-[protein] + ATP = O-phospho-L-threonyl-[protein] + ADP + H(+). It carries out the reaction L-tyrosyl-[protein] + ATP = O-phospho-L-tyrosyl-[protein] + ADP + H(+). In terms of biological role, may act as a positive regulator of ERK phosphorylation downstream of fibroblast growth factor-receptor activation. May induce both caspase-dependent apoptosis and caspase-independent cell death. May play a role in the embryonic development. The protein is Dual serine/threonine and tyrosine protein kinase of Strongylocentrotus purpuratus (Purple sea urchin).